A 118-amino-acid polypeptide reads, in one-letter code: DNA-binding protein MmarC5_1518 (118 aa).

Basic and acidic residues predominate over residues 1 to 12 (MNPEEIRQRRLQ). The tract at residues 1–35 (MNPEEIRQRRLQEMQAKAQEQGAEDPEAQRQAQEQ) is disordered.

This sequence belongs to the PDCD5 family.

The protein is DNA-binding protein MmarC5_1518 of Methanococcus maripaludis (strain C5 / ATCC BAA-1333).